A 755-amino-acid chain; its full sequence is Dynamin-1-like protein (755 aa).

M1 bears the N-acetylmethionine mark. Positions I22–P315 constitute a Dynamin-type G domain. Positions G32–S39 are G1 motif. G32–S40 serves as a coordination point for GTP. A G2 motif region spans residues V58–R60. Residues D159 to G162 form a G3 motif region. The G4 motif stretch occupies residues T228 to D231. Residues T228–D234 and N259–Q262 each bind GTP. Residues V258–S261 form a G5 motif region. Residues Y357 to I502 are middle domain. The interaction with GSK3B stretch occupies residues N461–E704. A b domain region spans residues A515 to N582. The segment at E536–G610 is disordered. A Phosphoserine modification is found at S542. Residues K545 and K548 each participate in a glycyl lysine isopeptide (Lys-Gly) (interchain with G-Cter in SUMO) cross-link. Positions P550–E567 are enriched in low complexity. S561 carries the post-translational modification Phosphoserine. Residues A568–K581 are compositionally biased toward basic and acidic residues. Residues K571 and K581 each participate in a glycyl lysine isopeptide (Lys-Gly) (interchain with G-Cter in SUMO) cross-link. Over residues A586–G600 the composition is skewed to gly residues. Residues T604 and T605 are each glycosylated (O-linked (GlcNAc) threonine). Residue K613 forms a Glycyl lysine isopeptide (Lys-Gly) (interchain with G-Cter in SUMO) linkage. At K616 the chain carries N6-acetyllysine; alternate. Residue K616 forms a Glycyl lysine isopeptide (Lys-Gly) (interchain with G-Cter in SUMO); alternate linkage. Residue K625 forms a Glycyl lysine isopeptide (Lys-Gly) (interchain with G-Cter in SUMO) linkage. At S626 the chain carries Phosphoserine. K627 is covalently cross-linked (Glycyl lysine isopeptide (Lys-Gly) (interchain with G-Cter in SUMO)). S635 is subject to Phosphoserine; by CDK1. S656 is modified (phosphoserine; by CAMK1 and PKA). C663 is subject to S-nitrosocysteine. Residues C663–L754 enclose the GED domain. The tract at residues Y673 to K687 is important for homodimerization.

This sequence belongs to the TRAFAC class dynamin-like GTPase superfamily. Dynamin/Fzo/YdjA family. In terms of assembly, homotetramer; dimerizes through the N-terminal GTP-middle region of one molecule binding to the GED domain of another DNM1L molecule. Oligomerizes in a GTP-dependent manner to form membrane-associated tubules with a spiral pattern. Interacts with GSK3B and MARCHF5. Interacts (via the GTPase and B domains) with UBE2I; the interaction promotes sumoylation of DNM1L, mainly in its B domain. Interacts with PPP3CA; the interaction dephosphorylates DNM1L and regulates its transition to mitochondria. Interacts with BCL2L1 isoform BCL-X(L) and CLTA; DNM1L and BCL2L1 isoform BCL-X(L) may form a complex in synaptic vesicles that also contains clathrin and MFF. Interacts with MFF; the interaction is inhinited by C11orf65/MFI. Interacts with FIS1. Interacts with MIEF2 and MIEF1; GTP-dependent this regulates GTP hydrolysis and DNM1L oligomerization. Interacts with PGAM5; this interaction leads to dephosphorylation at Ser-656 and activation of GTPase activity and eventually to mitochondria fragmentation. Interacts with RALBP1; during mitosis, recruits DNM1L to the mitochondrion and mediates its activation by the mitotic kinase cyclin B-CDK1. Interacts with FUNDC1; this interaction recruits DNM1L/DRP1 at ER-mitochondria contact sites. Post-translationally, phosphorylation/dephosphorylation events on two sites near the GED domain regulate mitochondrial fission. Phosphorylation on Ser-656 by CAMK1 and PKA inhibits the GTPase activity, leading to a defect in mitochondrial fission promoting mitochondrial elongation. Dephosphorylated on this site by PPP3CA which promotes mitochondrial fission. Phosphorylation on Ser-635 by PINK1 activates the GTPase activity and promotes mitochondrial fission. Phosphorylation on Ser-635 by CDK1 also promotes mitochondrial fission. Phosphorylated in a circadian manner at Ser-656. Dephosphorylated by PGAM5. In terms of processing, sumoylated on various lysine residues within the B domain, probably by MUL1. Sumoylation positively regulates mitochondrial fission. Desumoylated by SENP5 during G2/M transition of mitosis. Appears to be linked to its catalytic activity. S-nitrosylation increases DNM1L dimerization, mitochondrial fission and causes neuronal damage. Post-translationally, O-GlcNAcylation augments the level of the GTP-bound active form of DNM1L and induces translocation from the cytoplasm to mitochondria in cardiomyocytes. It also decreases phosphorylation at Ser-656. In terms of processing, ubiquitination by MARCHF5 affects mitochondrial morphology. As to expression, expressed in all tissues tested (at protein level). Longer isoforms are preferentially expressed in brain.

It is found in the cytoplasm. The protein resides in the cytosol. The protein localises to the golgi apparatus. Its subcellular location is the endomembrane system. It localises to the mitochondrion outer membrane. It is found in the peroxisome. The protein resides in the membrane. The protein localises to the clathrin-coated pit. Its subcellular location is the cytoplasmic vesicle. It localises to the secretory vesicle. It is found in the synaptic vesicle membrane. It carries out the reaction GTP + H2O = GDP + phosphate + H(+). In terms of biological role, functions in mitochondrial and peroxisomal division. Mediates membrane fission through oligomerization into membrane-associated tubular structures that wrap around the scission site to constrict and sever the mitochondrial membrane through a GTP hydrolysis-dependent mechanism. The specific recruitment at scission sites is mediated by membrane receptors like MFF, MIEF1 and MIEF2 for mitochondrial membranes. While the recruitment by the membrane receptors is GTP-dependent, the following hydrolysis of GTP induces the dissociation from the receptors and allows DNM1L filaments to curl into closed rings that are probably sufficient to sever a double membrane. Acts downstream of PINK1 to promote mitochondrial fission in a PRKN-dependent manner. Plays an important role in mitochondrial fission during mitosis. Through its function in mitochondrial division, ensures the survival of at least some types of postmitotic neurons, including Purkinje cells, by suppressing oxidative damage. Required for normal brain development, including that of cerebellum. Facilitates developmentally regulated apoptosis during neural tube formation. Required for a normal rate of cytochrome c release and caspase activation during apoptosis; this requirement may depend upon the cell type and the physiological apoptotic cues. Required for formation of endocytic vesicles. Proposed to regulate synaptic vesicle membrane dynamics through association with BCL2L1 isoform Bcl-X(L) which stimulates its GTPase activity in synaptic vesicles; the function may require its recruitment by MFF to clathrin-containing vesicles. Required for programmed necrosis execution. Rhythmic control of its activity following phosphorylation at Ser-656 is essential for the circadian control of mitochondrial ATP production. This Rattus norvegicus (Rat) protein is Dynamin-1-like protein.